Consider the following 288-residue polypeptide: Ribosomal protein L11 methyltransferase (288 aa).

Threonine 141, glycine 164, aspartate 186, and asparagine 227 together coordinate S-adenosyl-L-methionine.

The protein belongs to the methyltransferase superfamily. PrmA family.

It is found in the cytoplasm. The catalysed reaction is L-lysyl-[protein] + 3 S-adenosyl-L-methionine = N(6),N(6),N(6)-trimethyl-L-lysyl-[protein] + 3 S-adenosyl-L-homocysteine + 3 H(+). Methylates ribosomal protein L11. This Myxococcus xanthus (strain DK1622) protein is Ribosomal protein L11 methyltransferase.